A 749-amino-acid polypeptide reads, in one-letter code: Cytosolic phospholipase A2 (749 aa).

Positions 1 to 178 are phospholipid binding; it reads MSFIDPYQHI…MKKLLGPKNS (178 aa). Position 2 is a phosphoserine (serine 2). The C2 domain maps to 6-122; sequence PYQHIIVEHQ…KVGEKKEVPF (117 aa). Ca(2+) contacts are provided by aspartate 40, threonine 41, aspartate 43, asparagine 65, aspartate 93, alanine 94, and asparagine 95. Residues 140–740 form the PLA2c domain; the sequence is SCPDLRFSMA…SNVEARRFFN (601 aa). Residue serine 228 is the Nucleophile of the active site. At threonine 268 the chain carries Phosphothreonine. Residues 409–457 are disordered; it reads GSQSRGSTMEEELENITTKHIVSNDSSDSDDESHEPKGTENEDAGSDYQ. Phosphoserine occurs at positions 434, 435, and 437. Phosphoserine; by MAPK is present on serine 505. Serine 515 carries the phosphoserine modification. Lysine 541 participates in a covalent cross-link: Glycyl lysine isopeptide (Lys-Gly) (interchain with G-Cter in SUMO2). Aspartate 549 functions as the Proton acceptor in the catalytic mechanism. Lysine 606 participates in a covalent cross-link: Glycyl lysine isopeptide (Lys-Gly) (interchain with G-Cter in SUMO2). Serine 727 and serine 729 each carry phosphoserine.

In terms of assembly, interacts with KAT5. Phosphorylated at both Ser-505 and Ser-727 in response to mitogenic stimuli.

It is found in the cytoplasm. The protein localises to the golgi apparatus membrane. Its subcellular location is the nucleus envelope. It carries out the reaction a 1,2-diacyl-sn-glycero-3-phosphocholine + H2O = a 1-acyl-sn-glycero-3-phosphocholine + a fatty acid + H(+). The enzyme catalyses a 1-O-alkyl-2-acyl-sn-glycero-3-phosphocholine + H2O = a 1-O-alkyl-sn-glycero-3-phosphocholine + a fatty acid + H(+). It catalyses the reaction a 1-acyl-sn-glycero-3-phosphocholine + H2O = sn-glycerol 3-phosphocholine + a fatty acid + H(+). The catalysed reaction is 1-hexadecanoyl-2-(5Z,8Z,11Z,14Z-eicosatetraenoyl)-sn-glycero-3-phosphocholine + H2O = 1-hexadecanoyl-sn-glycero-3-phosphocholine + (5Z,8Z,11Z,14Z)-eicosatetraenoate + H(+). It carries out the reaction 1,2-di-(5Z,8Z,11Z,14Z-eicosatetraenoyl)-sn-glycero-3-phosphocholine + H2O = 1-(5Z,8Z,11Z,14Z-eicosatetraenoyl)-sn-glycero-3-phosphocholine + (5Z,8Z,11Z,14Z)-eicosatetraenoate + H(+). The enzyme catalyses 1-octadecanoyl-2-(5Z,8Z,11Z,14Z-eicosatetraenoyl)-sn-glycero-3-phosphocholine + H2O = 1-octadecanoyl-sn-glycero-3-phosphocholine + (5Z,8Z,11Z,14Z)-eicosatetraenoate + H(+). It catalyses the reaction 1-hexadecanoyl-2-(9Z,12Z-octadecadienoyl)-sn-glycero-3-phosphocholine + H2O = (9Z,12Z)-octadecadienoate + 1-hexadecanoyl-sn-glycero-3-phosphocholine + H(+). The catalysed reaction is 1-octadecanoyl-2-(9Z,12Z,15Z-octadecatrienoyl)-sn-glycero-3-phosphocholine + H2O = (9Z,12Z,15Z)-octadecatrienoate + 1-octadecanoyl-sn-glycero-3-phosphocholine + H(+). It carries out the reaction 1-(5Z,8Z,11Z,14Z-eicosatetraenoyl)-2-hexadecanoyl-sn-glycero-3-phosphocholine + H2O = 1-(5Z,8Z,11Z,14Z-eicosatetraenoyl)-sn-glycero-3-phosphocholine + hexadecanoate + H(+). The enzyme catalyses 1-O-hexadecyl-2-(5Z,8Z,11Z,14Z)-eicosatetraenoyl-sn-glycero-3-phosphocholine + H2O = 1-O-hexadecyl-sn-glycero-3-phosphocholine + (5Z,8Z,11Z,14Z)-eicosatetraenoate + H(+). It catalyses the reaction 1,2-di-(9Z-octadecenoyl)-sn-glycero-3-phospho-(1'-sn-glycerol) + H2O = 1-(9Z-octadecenoyl)-sn-glycero-3-phospho-(1'-sn-glycerol) + (9Z)-octadecenoate + H(+). The catalysed reaction is 1-octadecanoyl-2-(5Z,8Z,11Z,14Z-eicosatetraenoyl)-sn-glycero-3-phosphate + H2O = 1-octadecanoyl-sn-glycero-3-phosphate + (5Z,8Z,11Z,14Z)-eicosatetraenoate + H(+). It carries out the reaction 1-hexadecanoyl-sn-glycero-3-phosphocholine + H2O = sn-glycerol 3-phosphocholine + hexadecanoate + H(+). The enzyme catalyses 2-(prostaglandin E2)-sn-glycero-3-phosphoethanolamine + H2O = sn-glycero-3-phosphoethanolamine + prostaglandin E2 + H(+). It catalyses the reaction 2-[(15S)-hydroxy-(5Z,8Z,11Z,13E)-eicosatetraenoyl]-sn-glycero-3-phosphocholine + H2O = (15S)-hydroxy-(5Z,8Z,11Z,13E)-eicosatetraenoate + sn-glycerol 3-phosphocholine + H(+). The catalysed reaction is 2-[(15R)-hydroxy-(5Z,8Z,11Z,13E)-eicosatetraenoyl]-sn-glycero-3-phosphocholine + H2O = (15R)-hydroxy-(5Z,8Z,11Z,13E)-eicosatetraenoate + sn-glycerol 3-phosphocholine + H(+). It carries out the reaction 2-(prostaglandin E2)-sn-glycero-3-phosphocholine + H2O = prostaglandin E2 + sn-glycerol 3-phosphocholine + H(+). The enzyme catalyses 2-[(11R)-hydroxy-(5Z,8Z,12E,14Z)-eicosatetraenoyl]-sn-glycero-3-phosphocholine + H2O = (11R)-hydroxy-(5Z,8Z,12E,14Z)-eicosatetraenoate + sn-glycerol 3-phosphocholine + H(+). It catalyses the reaction 1-(5Z,8Z,11Z,14Z-eicosatetraenoyl)-2-O-hexadecyl-sn-glycero-3-phosphocholine + H2O = 2-O-hexadecyl-sn-glycero-3-phosphocholine + (5Z,8Z,11Z,14Z)-eicosatetraenoate + H(+). The catalysed reaction is 1-octadecanoyl-2-(5Z,8Z,11Z,14Z-eicosatetraenoyl)-sn-glycero-3-phosphocholine + glycerol = 1-(5Z,8Z,11Z,14Z-eicosatetraenoyl)-glycerol + 1-octadecanoyl-sn-glycero-3-phosphocholine. It carries out the reaction 1-octadecanoyl-2-(9Z,12Z,15Z-octadecatrienoyl)-sn-glycero-3-phosphocholine + glycerol = 1-(9Z,12Z,15Z-octadecatrienoyl)-glycerol + 1-octadecanoyl-sn-glycero-3-phosphocholine. It participates in membrane lipid metabolism; glycerophospholipid metabolism. Its pathway is lipid metabolism; arachidonate metabolism. The protein operates within lipid metabolism; prostaglandin biosynthesis. It functions in the pathway lipid metabolism; leukotriene B4 biosynthesis. Its activity is regulated as follows. Activated by cytosolic calcium, which is necessary for binding to membrane lipids. Activated by phosphorylation in response to mitogenic stimuli. Has primarily calcium-dependent phospholipase and lysophospholipase activities, with a major role in membrane lipid remodeling and biosynthesis of lipid mediators of the inflammatory response. Plays an important role in embryo implantation and parturition through its ability to trigger prostanoid production. Preferentially hydrolyzes the ester bond of the fatty acyl group attached at sn-2 position of phospholipids (phospholipase A2 activity). Selectively hydrolyzes sn-2 arachidonoyl group from membrane phospholipids, providing the precursor for eicosanoid biosynthesis via the cyclooxygenase pathway. In an alternative pathway of eicosanoid biosynthesis, hydrolyzes sn-2 fatty acyl chain of eicosanoid lysophopholipids to release free bioactive eicosanoids. Hydrolyzes the ester bond of the fatty acyl group attached at sn-1 position of phospholipids (phospholipase A1 activity) only if an ether linkage rather than an ester linkage is present at the sn-2 position. This hydrolysis is not stereospecific. Has calcium-independent phospholipase A2 and lysophospholipase activities in the presence of phosphoinositides. Has O-acyltransferase activity. Catalyzes the transfer of fatty acyl chains from phospholipids to a primary hydroxyl group of glycerol (sn-1 or sn-3), potentially contributing to monoacylglycerol synthesis. This chain is Cytosolic phospholipase A2 (PLA2G4A), found in Pongo abelii (Sumatran orangutan).